The primary structure comprises 390 residues: MKFVDEATILIVAGDGGNGCISFRREKYIPNGGPDGGDGGDGGDVYLLADENLNTLIDYRFEKSFRAERGQNGQSRDCTGKRGKDITIKVPVGTRVLDQGTGEVLGDMTRHQQSLMVGKGGWHGLGNSRFKSSVNRAPRQKTNGTKGEERELTLELLLLADVGMLGLPNAGKSTFIRAVSAAKPKVADYPFTTLVPSLGVVRMDSEQSFVVADIPGLIEGASDGAGLGIRFLKHLERCRVLLHLVDLAPIDESNPIENAKVIINELEQYGAGLAEKPRWLVFNKVDLIDKAEAEKRAKEIAAALGWDDKYYLISAANREGVNPLCWDVMNFLKANPKMMAIAESAPEKVEFMWDDYHREQLAEVEKEAEEEWDDDWDDEDDEGVEIIYQK.

Residues 1–159 (MKFVDEATIL…RELTLELLLL (159 aa)) form the Obg domain. Residues 128–147 (SRFKSSVNRAPRQKTNGTKG) form a disordered region. Positions 129–145 (RFKSSVNRAPRQKTNGT) are enriched in polar residues. One can recognise an OBG-type G domain in the interval 160–333 (ADVGMLGLPN…LCWDVMNFLK (174 aa)). GTP is bound by residues 166 to 173 (GLPNAGKS), 191 to 195 (FTTLV), 213 to 216 (DIPG), 283 to 286 (NKVD), and 314 to 316 (SAA). S173 and T193 together coordinate Mg(2+).

It belongs to the TRAFAC class OBG-HflX-like GTPase superfamily. OBG GTPase family. As to quaternary structure, monomer. The cofactor is Mg(2+).

Its subcellular location is the cytoplasm. Functionally, an essential GTPase which binds GTP, GDP and possibly (p)ppGpp with moderate affinity, with high nucleotide exchange rates and a fairly low GTP hydrolysis rate. Plays a role in control of the cell cycle, stress response, ribosome biogenesis and in those bacteria that undergo differentiation, in morphogenesis control. The chain is GTPase Obg from Pectobacterium atrosepticum (strain SCRI 1043 / ATCC BAA-672) (Erwinia carotovora subsp. atroseptica).